The primary structure comprises 274 residues: N-acetylmuramic acid 6-phosphate etherase (274 aa).

In terms of domain architecture, SIS spans 52–215 (IIPRMEQGGR…STSIMIRLGR (164 aa)). The Proton donor role is filled by glutamate 80. The active site involves glutamate 111.

The protein belongs to the GCKR-like family. MurNAc-6-P etherase subfamily. Homodimer.

The enzyme catalyses N-acetyl-D-muramate 6-phosphate + H2O = N-acetyl-D-glucosamine 6-phosphate + (R)-lactate. It functions in the pathway amino-sugar metabolism; N-acetylmuramate degradation. Functionally, specifically catalyzes the cleavage of the D-lactyl ether substituent of MurNAc 6-phosphate, producing GlcNAc 6-phosphate and D-lactate. In Porphyromonas gingivalis (strain ATCC BAA-308 / W83), this protein is N-acetylmuramic acid 6-phosphate etherase.